The chain runs to 62 residues: DNA-directed RNA polymerase subunit Rpo10 (62 aa).

Residues C6, C9, C43, and C44 each coordinate Zn(2+).

This sequence belongs to the archaeal Rpo10/eukaryotic RPB10 RNA polymerase subunit family. Part of the RNA polymerase complex. Zn(2+) is required as a cofactor.

It localises to the cytoplasm. The enzyme catalyses RNA(n) + a ribonucleoside 5'-triphosphate = RNA(n+1) + diphosphate. Functionally, DNA-dependent RNA polymerase (RNAP) catalyzes the transcription of DNA into RNA using the four ribonucleoside triphosphates as substrates. This is DNA-directed RNA polymerase subunit Rpo10 from Methanosarcina barkeri (strain Fusaro / DSM 804).